The primary structure comprises 158 residues: Regulator of sigma D (158 aa).

The protein belongs to the Rsd/AlgQ family. In terms of assembly, interacts with RpoD.

The protein resides in the cytoplasm. Its function is as follows. Binds RpoD and negatively regulates RpoD-mediated transcription activation by preventing the interaction between the primary sigma factor RpoD with the catalytic core of the RNA polymerase and with promoter DNA. May be involved in replacement of the RNA polymerase sigma subunit from RpoD to RpoS during the transition from exponential growth to the stationary phase. The sequence is that of Regulator of sigma D from Escherichia coli (strain UTI89 / UPEC).